We begin with the raw amino-acid sequence, 45 residues long: uncharacterized protein (45 aa).

Belongs to the asfivirus C62L family.

This is an uncharacterized protein from Ornithodoros (relapsing fever ticks).